Reading from the N-terminus, the 349-residue chain is Heat-inducible transcription repressor HrcA (349 aa).

Belongs to the HrcA family.

Negative regulator of class I heat shock genes (grpE-dnaK-dnaJ and groELS operons). Prevents heat-shock induction of these operons. This is Heat-inducible transcription repressor HrcA from Xylella fastidiosa (strain M23).